Consider the following 1356-residue polypeptide: DNA-directed RNA polymerase subunit beta (1356 aa).

This sequence belongs to the RNA polymerase beta chain family. In terms of assembly, the RNAP catalytic core consists of 2 alpha, 1 beta, 1 beta' and 1 omega subunit. When a sigma factor is associated with the core the holoenzyme is formed, which can initiate transcription.

The enzyme catalyses RNA(n) + a ribonucleoside 5'-triphosphate = RNA(n+1) + diphosphate. In terms of biological role, DNA-dependent RNA polymerase catalyzes the transcription of DNA into RNA using the four ribonucleoside triphosphates as substrates. The chain is DNA-directed RNA polymerase subunit beta from Stutzerimonas stutzeri (strain A1501) (Pseudomonas stutzeri).